The sequence spans 1029 residues: Kinesin-like protein KIF17 (1029 aa).

The region spanning 5–335 (AVKVVVRCRP…LRYANRAKNI (331 aa)) is the Kinesin motor domain. Residue 91 to 98 (GQTGSGKS) coordinates ATP. Residues 346–462 (KDALLREYQE…EENLRKETEA (117 aa)) are a coiled coil. Disordered regions lie at residues 523-569 (ELPK…MPTE) and 647-673 (VPAP…PPRP). Low complexity predominate over residues 532 to 551 (SEISLGSSESSSLEETSVSE). The segment covering 657-673 (SDARPEAEAADDFPPRP) has biased composition (basic and acidic residues). Residues 739–846 (QQVLARLQLL…QLEKIDYLAT (108 aa)) adopt a coiled-coil conformation. Disordered stretches follow at residues 908-931 (AVST…EPNM) and 968-1029 (KSLT…SEPL).

The protein belongs to the TRAFAC class myosin-kinesin ATPase superfamily. Kinesin family. Homodimer. Interacts with APBA1 (via PDZ domain); the interaction is direct and is required for association of KIF17 with the cargo that is to be transported. Interacts with IFT B complex components IFT52 and IFT57. Interacts with IFT70B. Interacts with PIWIL1. Interacts with TBATA.

Its subcellular location is the cytoplasm. It localises to the cytoskeleton. It is found in the cell projection. The protein resides in the cilium. The protein localises to the dendrite. Its function is as follows. Dendrite-specific motor protein which, in association with the Apba1-containing complex (LIN-10-LIN-2-LIN-7 complex), transports vesicles containing N-methyl-D-aspartate (NMDA) receptor subunit NR2B along microtubules. The sequence is that of Kinesin-like protein KIF17 (KIF17) from Homo sapiens (Human).